Here is a 223-residue protein sequence, read N- to C-terminus: Ribonuclease 3 (223 aa).

The region spanning leucine 3–glycine 125 is the RNase III domain. A Mg(2+)-binding site is contributed by glutamate 38. Residue aspartate 42 is part of the active site. The Mg(2+) site is built by aspartate 111 and glutamate 114. Glutamate 114 is a catalytic residue. The region spanning aspartate 152–isoleucine 222 is the DRBM domain.

This sequence belongs to the ribonuclease III family. In terms of assembly, homodimer. The cofactor is Mg(2+).

It is found in the cytoplasm. It catalyses the reaction Endonucleolytic cleavage to 5'-phosphomonoester.. In terms of biological role, digests double-stranded RNA. Involved in the processing of primary rRNA transcript to yield the immediate precursors to the large and small rRNAs (23S and 16S). Processes some mRNAs, and tRNAs when they are encoded in the rRNA operon. Processes pre-crRNA and tracrRNA of type II CRISPR loci if present in the organism. The protein is Ribonuclease 3 of Glaesserella parasuis serovar 5 (strain SH0165) (Haemophilus parasuis).